The sequence spans 382 residues: 1-deoxy-D-xylulose 5-phosphate reductoisomerase (382 aa).

NADPH contacts are provided by Thr10, Gly11, Ser12, Ile13, Gly36, and Asn122. Position 123 (Lys123) interacts with 1-deoxy-D-xylulose 5-phosphate. Glu124 lines the NADPH pocket. Residue Asp148 participates in Mn(2+) binding. Ser149, Glu150, Ser174, and His197 together coordinate 1-deoxy-D-xylulose 5-phosphate. Mn(2+) is bound at residue Glu150. Gly203 lines the NADPH pocket. 1-deoxy-D-xylulose 5-phosphate-binding residues include Ser210, Asn215, Lys216, and Glu219. Glu219 lines the Mn(2+) pocket.

The protein belongs to the DXR family. The cofactor is Mg(2+). Requires Mn(2+) as cofactor.

It catalyses the reaction 2-C-methyl-D-erythritol 4-phosphate + NADP(+) = 1-deoxy-D-xylulose 5-phosphate + NADPH + H(+). It functions in the pathway isoprenoid biosynthesis; isopentenyl diphosphate biosynthesis via DXP pathway; isopentenyl diphosphate from 1-deoxy-D-xylulose 5-phosphate: step 1/6. Catalyzes the NADPH-dependent rearrangement and reduction of 1-deoxy-D-xylulose-5-phosphate (DXP) to 2-C-methyl-D-erythritol 4-phosphate (MEP). The polypeptide is 1-deoxy-D-xylulose 5-phosphate reductoisomerase (Chlorobium limicola (strain DSM 245 / NBRC 103803 / 6330)).